The sequence spans 620 residues: UPF0313 protein BT_0254 (620 aa).

The Radical SAM core domain maps to alanine 311–lysine 591. 3 residues coordinate [4Fe-4S] cluster: cysteine 325, cysteine 329, and cysteine 332.

The protein belongs to the UPF0313 family. Requires [4Fe-4S] cluster as cofactor.

The sequence is that of UPF0313 protein BT_0254 from Bacteroides thetaiotaomicron (strain ATCC 29148 / DSM 2079 / JCM 5827 / CCUG 10774 / NCTC 10582 / VPI-5482 / E50).